A 57-amino-acid polypeptide reads, in one-letter code: Large ribosomal subunit protein uL30 (57 aa).

The protein belongs to the universal ribosomal protein uL30 family. As to quaternary structure, part of the 50S ribosomal subunit.

This Maridesulfovibrio salexigens (strain ATCC 14822 / DSM 2638 / NCIMB 8403 / VKM B-1763) (Desulfovibrio salexigens) protein is Large ribosomal subunit protein uL30.